Here is a 263-residue protein sequence, read N- to C-terminus: Acyl-[acyl-carrier-protein]--UDP-N-acetylglucosamine O-acyltransferase (263 aa).

It belongs to the transferase hexapeptide repeat family. LpxA subfamily. Homotrimer.

The protein localises to the cytoplasm. It carries out the reaction a (3R)-hydroxyacyl-[ACP] + UDP-N-acetyl-alpha-D-glucosamine = a UDP-3-O-[(3R)-3-hydroxyacyl]-N-acetyl-alpha-D-glucosamine + holo-[ACP]. The protein operates within glycolipid biosynthesis; lipid IV(A) biosynthesis; lipid IV(A) from (3R)-3-hydroxytetradecanoyl-[acyl-carrier-protein] and UDP-N-acetyl-alpha-D-glucosamine: step 1/6. Functionally, involved in the biosynthesis of lipid A, a phosphorylated glycolipid that anchors the lipopolysaccharide to the outer membrane of the cell. The sequence is that of Acyl-[acyl-carrier-protein]--UDP-N-acetylglucosamine O-acyltransferase from Xanthomonas campestris pv. campestris (strain 8004).